Reading from the N-terminus, the 643-residue chain is Protein ecdysoneless homolog (643 aa).

Disordered stretches follow at residues 428–458 and 501–600; these read EFYNSKKERKNKGKEKQEAGSSSDANMNNFD and IESM…FTPV. Residues 446 to 456 show a composition bias toward polar residues; sequence AGSSSDANMNN. Acidic residues predominate over residues 528 to 543; the sequence is MDFDDVEDDSEGEESN. Over residues 564–580 the composition is skewed to polar residues; that stretch reads NSTLEKSFENVNQQHSS. A compositionally biased stretch (basic and acidic residues) spans 581 to 592; it reads KQNEESSKTRDE.

This sequence belongs to the ECD family.

This Arabidopsis thaliana (Mouse-ear cress) protein is Protein ecdysoneless homolog.